Consider the following 150-residue polypeptide: Sec-independent protein translocase protein TatB (150 aa).

Residues 1-21 (MFDLSWSEIALVGVVALIVIG) form a helical membrane-spanning segment. Residues 77–86 (KIDQAIDPDG) show a composition bias toward basic and acidic residues. A disordered region spans residues 77 to 150 (KIDQAIDPDG…RTDGSLPPQD (74 aa)). Positions 109–135 (AAPPSLPPQAPAQPVPPATGAAPPSPS) are enriched in pro residues.

It belongs to the TatB family. The Tat system comprises two distinct complexes: a TatABC complex, containing multiple copies of TatA, TatB and TatC subunits, and a separate TatA complex, containing only TatA subunits. Substrates initially bind to the TatABC complex, which probably triggers association of the separate TatA complex to form the active translocon.

The protein localises to the cell inner membrane. In terms of biological role, part of the twin-arginine translocation (Tat) system that transports large folded proteins containing a characteristic twin-arginine motif in their signal peptide across membranes. Together with TatC, TatB is part of a receptor directly interacting with Tat signal peptides. TatB may form an oligomeric binding site that transiently accommodates folded Tat precursor proteins before their translocation. The sequence is that of Sec-independent protein translocase protein TatB from Rhodospirillum rubrum (strain ATCC 11170 / ATH 1.1.1 / DSM 467 / LMG 4362 / NCIMB 8255 / S1).